A 326-amino-acid polypeptide reads, in one-letter code: Toluene-4-monooxygenase system, ferredoxin--NAD(+) reductase component (326 aa).

In terms of domain architecture, 2Fe-2S ferredoxin-type spans 1 to 92; the sequence is MFNIQSDDLL…DLKIKVINRA (92 aa). [2Fe-2S] cluster is bound by residues Cys-36, Cys-41, Cys-44, and Cys-76. The interval 95 to 326 is ferredoxin-reductase; sequence RASHPPKRFS…FEAIHFDRFF (232 aa). In terms of domain architecture, FAD-binding FR-type spans 100–195; sequence PKRFSTRVVS…DGPYGLSVLK (96 aa). FAD is bound by residues 146-149, 162-164, and 170-172; these read RAYS, IVK, and KVS.

This sequence belongs to the bacterial ring-hydroxylating dioxygenase ferredoxin reductase family. In terms of assembly, monomer. The alkene monooxygenase multicomponent enzyme system is composed of an electron transfer component and a monooxygenase component interacting with the effector protein TmoD. The electron transfer component is composed of a ferredoxin reductase (TmoF) and a ferredoxin (TmoC), and the monooxygenase component is formed by a heterohexamer (dimer of heterotrimers) of two alpha subunits (TmoA), two beta subunits (TmoE) and two gamma subunits (TmoB). It depends on FAD as a cofactor. Requires [2Fe-2S] cluster as cofactor.

The catalysed reaction is 2 reduced [2Fe-2S]-[ferredoxin] + NAD(+) + H(+) = 2 oxidized [2Fe-2S]-[ferredoxin] + NADH. It participates in xenobiotic degradation; toluene degradation. Reductase component of the toluene-4-monooxygenase multicomponent enzyme system which catalyzes the O2- and NADH-dependent hydroxylation of toluene to form p-cresol. Ferredoxin reductase catalyzes the transfer of electrons from NADH to ferredoxin (TmoC). This Ectopseudomonas mendocina (Pseudomonas mendocina) protein is Toluene-4-monooxygenase system, ferredoxin--NAD(+) reductase component.